Here is a 117-residue protein sequence, read N- to C-terminus: MAKRLERDGQPNRSLRIPAERWRFRIRGLVQGVGYRAGCCRRAQELGLAGWVRNCSDGSVEVQAEGDEQRLTELRVWCEGGPPGARVDSVDGSRVATTGADWFEIRPNHFQGGALTR.

The region spanning 21-107 (RWRFRIRGLV…TGADWFEIRP (87 aa)) is the Acylphosphatase-like domain. Catalysis depends on residues arginine 36 and asparagine 54.

It belongs to the acylphosphatase family.

The catalysed reaction is an acyl phosphate + H2O = a carboxylate + phosphate + H(+). This is Acylphosphatase (acyP) from Synechococcus sp. (strain RCC307).